Reading from the N-terminus, the 239-residue chain is Beta-glucanase (239 aa).

Residues 1–25 form the signal peptide; that stretch reads MKRVLLILVTGLFMSLCGITSSVSA. The region spanning 26-239 is the GH16 domain; it reads QTGGSFFEPF…HYDWMRYRKK (214 aa). C57 and C86 are joined by a disulfide. Catalysis depends on E134, which acts as the Nucleophile.

This sequence belongs to the glycosyl hydrolase 16 family.

The enzyme catalyses Hydrolysis of (1-&gt;4)-beta-D-glucosidic linkages in beta-D-glucans containing (1-&gt;3)- and (1-&gt;4)-bonds.. The protein is Beta-glucanase (bglA) of Bacillus amyloliquefaciens (Bacillus velezensis).